Reading from the N-terminus, the 119-residue chain is Large ribosomal subunit protein uL14c (119 aa).

It belongs to the universal ribosomal protein uL14 family. As to quaternary structure, part of the 50S ribosomal subunit.

It is found in the plastid. The protein localises to the chloroplast. Functionally, binds to 23S rRNA. This chain is Large ribosomal subunit protein uL14c, found in Ostreococcus tauri.